The following is a 524-amino-acid chain: Na(+)/H(+) antiporter NhaB (524 aa).

9 helical membrane passes run 13-33 (FLGNSPDWYKLAIMGFLIINP), 98-118 (LLLVFMVAGIYFMKQLLLFVF), 140-160 (AFLSAFLDALTVIAVVISVSV), 239-259 (FFIRMLPVTLPVFIFGLLVCL), 304-324 (AIIGVWLVLALALHLAEVGLV), 325-345 (GLSVIILATSFCGITNEHSLG), 358-378 (LTVFFAVVAVIIEQSLFTPII), 448-468 (ATPNGQAAFLFLLTSALAPLI), and 479-499 (ALPYTLVMTIVGLLGVEFLLV).

It belongs to the NhaB Na(+)/H(+) (TC 2.A.34) antiporter family.

Its subcellular location is the cell inner membrane. It carries out the reaction 2 Na(+)(in) + 3 H(+)(out) = 2 Na(+)(out) + 3 H(+)(in). Functionally, na(+)/H(+) antiporter that extrudes sodium in exchange for external protons. This Yersinia pseudotuberculosis serotype I (strain IP32953) protein is Na(+)/H(+) antiporter NhaB.